Reading from the N-terminus, the 194-residue chain is Peptidyl-tRNA hydrolase (194 aa).

Position 17 (Tyr17) interacts with tRNA. The Proton acceptor role is filled by His22. The tRNA site is built by Phe68, Asn70, and Asn116.

This sequence belongs to the PTH family. In terms of assembly, monomer.

It is found in the cytoplasm. The enzyme catalyses an N-acyl-L-alpha-aminoacyl-tRNA + H2O = an N-acyl-L-amino acid + a tRNA + H(+). Its function is as follows. Hydrolyzes ribosome-free peptidyl-tRNAs (with 1 or more amino acids incorporated), which drop off the ribosome during protein synthesis, or as a result of ribosome stalling. Catalyzes the release of premature peptidyl moieties from peptidyl-tRNA molecules trapped in stalled 50S ribosomal subunits, and thus maintains levels of free tRNAs and 50S ribosomes. This is Peptidyl-tRNA hydrolase from Haemophilus influenzae (strain PittGG).